The chain runs to 163 residues: Neurotrophin-3 (163 aa).

The signal sequence occupies residues 1–3; that stretch reads IQS. The propeptide occupies 4-119; sequence SSMDQGILTE…VLNRTSRRKR (116 aa). The interval 36–61 is disordered; that stretch reads QTARTKDGMQTTVKKTEAEADARASQ. Basic and acidic residues predominate over residues 49-61; it reads KKTEAEADARASQ. A glycan (N-linked (GlcNAc...) asparagine) is linked at asparagine 112.

The protein belongs to the NGF-beta family.

It localises to the secreted. Its function is as follows. Seems to promote the survival of visceral and proprioceptive sensory neurons. The chain is Neurotrophin-3 (NTF3) from Boa constrictor (Boa).